A 308-amino-acid chain; its full sequence is Glutathione synthetase (308 aa).

In terms of domain architecture, ATP-grasp spans 117-300 (KLLPLSFPKF…LERDCWDYFE (184 aa)). 143 to 198 (YAEYGDIVLKPLYDYGGNGVCRICGRADVGAISSAMVERYEAPLVAQQFIDDISSD) serves as a coordination point for ATP. Mg(2+) contacts are provided by glutamate 271 and asparagine 273.

This sequence belongs to the prokaryotic GSH synthase family. Mg(2+) is required as a cofactor. The cofactor is Mn(2+).

It catalyses the reaction gamma-L-glutamyl-L-cysteine + glycine + ATP = glutathione + ADP + phosphate + H(+). It functions in the pathway sulfur metabolism; glutathione biosynthesis; glutathione from L-cysteine and L-glutamate: step 2/2. The polypeptide is Glutathione synthetase (Anaplasma centrale).